We begin with the raw amino-acid sequence, 334 residues long: Transaldolase (334 aa).

The active-site Schiff-base intermediate with substrate is the Lys-136.

Belongs to the transaldolase family. Type 1 subfamily. Homodimer.

It is found in the cytoplasm. It catalyses the reaction D-sedoheptulose 7-phosphate + D-glyceraldehyde 3-phosphate = D-erythrose 4-phosphate + beta-D-fructose 6-phosphate. It functions in the pathway carbohydrate degradation; pentose phosphate pathway; D-glyceraldehyde 3-phosphate and beta-D-fructose 6-phosphate from D-ribose 5-phosphate and D-xylulose 5-phosphate (non-oxidative stage): step 2/3. Functionally, transaldolase is important for the balance of metabolites in the pentose-phosphate pathway. In Nostoc punctiforme (strain ATCC 29133 / PCC 73102), this protein is Transaldolase.